We begin with the raw amino-acid sequence, 152 residues long: Ribosome maturation factor RimP (152 aa).

It belongs to the RimP family.

The protein localises to the cytoplasm. Its function is as follows. Required for maturation of 30S ribosomal subunits. The sequence is that of Ribosome maturation factor RimP from Alkalilimnicola ehrlichii (strain ATCC BAA-1101 / DSM 17681 / MLHE-1).